Consider the following 952-residue polypeptide: Aminopeptidase 2, mitochondrial (952 aa).

The N-terminal 52 residues, 1–52 (MPIVRWLLLKSAVRGSSLIGKAHPCLRSIAAHPRYLSNVYSPPAGVSRSLRI), are a transit peptide targeting the mitochondrion. Substrate-binding positions include Glu228 and 360-364 (GAMEN). Asn381 carries an N-linked (GlcNAc...) asparagine glycan. A Zn(2+)-binding site is contributed by His396. The active-site Proton acceptor is Glu397. Residues His400 and Glu419 each coordinate Zn(2+). The N-linked (GlcNAc...) asparagine glycan is linked to Asn713.

The protein belongs to the peptidase M1 family. Zn(2+) serves as cofactor.

Its subcellular location is the periplasm. The protein localises to the cytoplasm. The protein resides in the mitochondrion. Functionally, involved in the cellular supply of leucine from externally offered leucine-containing dipeptide substrates. This Saccharomyces cerevisiae (strain ATCC 204508 / S288c) (Baker's yeast) protein is Aminopeptidase 2, mitochondrial (APE2).